Reading from the N-terminus, the 70-residue chain is Large ribosomal subunit protein eL38 (70 aa).

The protein belongs to the eukaryotic ribosomal protein eL38 family.

The sequence is that of Large ribosomal subunit protein eL38 (RpL38) from Timarcha balearica.